Consider the following 294-residue polypeptide: uncharacterized protein (294 aa).

Residues 5–25 (ILIILIIIIIVIISLIYLKNF) form a helical membrane-spanning segment. N-linked (GlcNAc...) asparagine; by host glycosylation is found at N151, N170, N205, and N271.

It is found in the membrane. This is an uncharacterized protein from Acanthamoeba polyphaga (Amoeba).